Reading from the N-terminus, the 241-residue chain is DNA repair protein RecO (241 aa).

It belongs to the RecO family.

Involved in DNA repair and RecF pathway recombination. The chain is DNA repair protein RecO from Rickettsia bellii (strain OSU 85-389).